A 568-amino-acid chain; its full sequence is Putative F-box protein At5g39480 (568 aa).

One can recognise an F-box domain in the interval 9 to 55; it reads ACLLLTLPEDVFAVISRFLSPSDICNLILCGKSLPALVDTEKMWLVQ. Residues 315–337 form a disordered region; it reads TNVLGESSSSKNTTPSQSEIRVS. The span at 321 to 332 shows a compositional bias: low complexity; the sequence is SSSSKNTTPSQS.

The protein is Putative F-box protein At5g39480 of Arabidopsis thaliana (Mouse-ear cress).